Consider the following 990-residue polypeptide: Pentatricopeptide repeat-containing protein At4g33170 (990 aa).

PPR repeat units lie at residues 73 to 107, 109 to 139, 144 to 178, 179 to 209, 210 to 244, 279 to 313, 314 to 348, 349 to 379, 380 to 414, 415 to 450, 451 to 477, 481 to 515, 516 to 550, 551 to 581, 582 to 616, 617 to 651, 652 to 682, 683 to 717, 718 to 753, and 754 to 788; these read ERFL…DLVS, NSIL…LRQD, SRMT…GLDG, DEFV…MPYR, DVVL…GLNP, EIIF…DVEC, DQVT…GLDL, MLTV…MSER, DLIS…GLKP, DQYT…NNVS, DSFV…LFER, DLVA…GERS, DDFT…GYDL, DLWV…IPVP, DDVA…GVLP, DEFT…NCTN, DPFV…IEMM, NITA…GIKP, DKVT…GIKP, and EIEH…ASAS. The interval 789–864 is type E motif; that stretch reads MYRTLLAACR…DPGFSWIEVK (76 aa). The interval 865–895 is type E(+) motif; sequence NKIHIFVVDDRSNRQTELIYRKVKDMIRDIK. A type DYW motif region spans residues 896-990; it reads QEGYVPETDF…DGICSCGDYW (95 aa).

The protein belongs to the PPR family. PCMP-H subfamily.

The chain is Pentatricopeptide repeat-containing protein At4g33170 (PCMP-H53) from Arabidopsis thaliana (Mouse-ear cress).